The chain runs to 95 residues: Small integral membrane protein 26 (95 aa).

The chain crosses the membrane as a helical span at residues 13–35 (MSVVYGIGTWSVLGSLLYYSRTM).

This sequence belongs to the SMIM26 family. As to quaternary structure, interacts with AGK and SLC25A11. As to expression, detected in kidney (at protein level).

The protein localises to the mitochondrion outer membrane. Functionally, may play a role in cell viability. The protein is Small integral membrane protein 26 of Homo sapiens (Human).